A 217-amino-acid chain; its full sequence is tRNA (guanine-N(7)-)-methyltransferase (217 aa).

Residues glutamate 48, glutamate 73, asparagine 100, and aspartate 123 each coordinate S-adenosyl-L-methionine. Aspartate 123 is a catalytic residue. The substrate site is built by lysine 127 and aspartate 159.

The protein belongs to the class I-like SAM-binding methyltransferase superfamily. TrmB family.

The catalysed reaction is guanosine(46) in tRNA + S-adenosyl-L-methionine = N(7)-methylguanosine(46) in tRNA + S-adenosyl-L-homocysteine. It participates in tRNA modification; N(7)-methylguanine-tRNA biosynthesis. Its function is as follows. Catalyzes the formation of N(7)-methylguanine at position 46 (m7G46) in tRNA. The polypeptide is tRNA (guanine-N(7)-)-methyltransferase (Leptospira borgpetersenii serovar Hardjo-bovis (strain JB197)).